We begin with the raw amino-acid sequence, 429 residues long: 5-methylthioadenosine/S-adenosylhomocysteine deaminase (429 aa).

Residues H65 and H67 each coordinate Zn(2+). 2 residues coordinate substrate: E94 and H182. H209 serves as a coordination point for Zn(2+). E212 and D297 together coordinate substrate. D297 is a Zn(2+) binding site.

It belongs to the metallo-dependent hydrolases superfamily. MTA/SAH deaminase family. Zn(2+) is required as a cofactor.

It carries out the reaction S-adenosyl-L-homocysteine + H2O + H(+) = S-inosyl-L-homocysteine + NH4(+). It catalyses the reaction S-methyl-5'-thioadenosine + H2O + H(+) = S-methyl-5'-thioinosine + NH4(+). Its function is as follows. Catalyzes the deamination of 5-methylthioadenosine and S-adenosyl-L-homocysteine into 5-methylthioinosine and S-inosyl-L-homocysteine, respectively. Is also able to deaminate adenosine. The sequence is that of 5-methylthioadenosine/S-adenosylhomocysteine deaminase from Clostridium tetani (strain Massachusetts / E88).